Here is a 320-residue protein sequence, read N- to C-terminus: Protoheme IX farnesyltransferase (320 aa).

The segment at 1 to 24 (MSMITERPVSDPAGQSVSATGDGA) is disordered. The next 8 membrane-spanning stretches (helical) occupy residues 33-55 (AVVAAYVALTKPRIVELLLVTTV), 68-88 (LWLMAVVLVGGSLAAGAASVL), 117-137 (NALIFGLVLATVSVTLLAVFT), 140-160 (LAAGLTLAAILYYDLVYTAWL), 183-203 (WAAVTGSLAPAAWALFGVVFF), 241-261 (ILVFAWLTVLVSLVTWPLGAG), 262-282 (MGPIYGLPTLVVGVIFLVEAH), and 300-320 (FHWSTTYLTVVFAAVALDALI).

Belongs to the UbiA prenyltransferase family. Protoheme IX farnesyltransferase subfamily.

It localises to the cell membrane. The enzyme catalyses heme b + (2E,6E)-farnesyl diphosphate + H2O = Fe(II)-heme o + diphosphate. The protein operates within porphyrin-containing compound metabolism; heme O biosynthesis; heme O from protoheme: step 1/1. Functionally, converts heme B (protoheme IX) to heme O by substitution of the vinyl group on carbon 2 of heme B porphyrin ring with a hydroxyethyl farnesyl side group. The polypeptide is Protoheme IX farnesyltransferase (Salinispora tropica (strain ATCC BAA-916 / DSM 44818 / JCM 13857 / NBRC 105044 / CNB-440)).